The following is a 449-amino-acid chain: NADH-quinone oxidoreductase subunit D (449 aa).

It belongs to the complex I 49 kDa subunit family. In terms of assembly, NDH-1 is composed of 14 different subunits. Subunits NuoB, C, D, E, F, and G constitute the peripheral sector of the complex.

The protein resides in the cell membrane. It carries out the reaction a quinone + NADH + 5 H(+)(in) = a quinol + NAD(+) + 4 H(+)(out). Its function is as follows. NDH-1 shuttles electrons from NADH, via FMN and iron-sulfur (Fe-S) centers, to quinones in the respiratory chain. The immediate electron acceptor for the enzyme in this species is believed to be a menaquinone. Couples the redox reaction to proton translocation (for every two electrons transferred, four hydrogen ions are translocated across the cytoplasmic membrane), and thus conserves the redox energy in a proton gradient. The protein is NADH-quinone oxidoreductase subunit D of Saccharopolyspora erythraea (strain ATCC 11635 / DSM 40517 / JCM 4748 / NBRC 13426 / NCIMB 8594 / NRRL 2338).